A 142-amino-acid polypeptide reads, in one-letter code: Large ribosomal subunit protein uL13 (142 aa).

It belongs to the universal ribosomal protein uL13 family. Part of the 50S ribosomal subunit.

Its function is as follows. This protein is one of the early assembly proteins of the 50S ribosomal subunit, although it is not seen to bind rRNA by itself. It is important during the early stages of 50S assembly. In Francisella philomiragia subsp. philomiragia (strain ATCC 25017 / CCUG 19701 / FSC 153 / O#319-036), this protein is Large ribosomal subunit protein uL13.